Consider the following 289-residue polypeptide: Glycine--tRNA ligase alpha subunit (289 aa).

Belongs to the class-II aminoacyl-tRNA synthetase family. As to quaternary structure, tetramer of two alpha and two beta subunits.

Its subcellular location is the cytoplasm. It catalyses the reaction tRNA(Gly) + glycine + ATP = glycyl-tRNA(Gly) + AMP + diphosphate. This chain is Glycine--tRNA ligase alpha subunit, found in Prochlorococcus marinus subsp. pastoris (strain CCMP1986 / NIES-2087 / MED4).